We begin with the raw amino-acid sequence, 162 residues long: Phospholipase A and acyltransferase 3 (162 aa).

The Cytoplasmic portion of the chain corresponds to Met-1–Val-133. The LRAT domain occupies Leu-13–Gln-129. Active-site residues include His-23 and His-35. Cys-113 serves as the catalytic Acyl-thioester intermediate. A helical transmembrane segment spans residues Ile-134–Phe-154. Residues Ser-155–Gln-162 are Lumenal-facing.

This sequence belongs to the H-rev107 family. Interacts with PPP2R1A; this interaction might decrease PP2A activity. As to expression, widely expressed. Low expression, if any, in hematopoietic cells and thymus. In testis, confined to round spermatids. Expressed in normal ovarian epithelial cells. Down-regulated in some ovarian carcinomas and testicular germ cell tumors. Highly expressed in white adipose tissue.

Its subcellular location is the cell membrane. The protein localises to the cytoplasm. The protein resides in the cytosol. It localises to the perinuclear region. It is found in the peroxisome membrane. Its subcellular location is the mitochondrion membrane. The protein localises to the nucleus envelope. The protein resides in the lysosome membrane. It localises to the endoplasmic reticulum membrane. The enzyme catalyses a 1,2-diacyl-sn-glycero-3-phosphocholine + H2O = a 1-acyl-sn-glycero-3-phosphocholine + a fatty acid + H(+). It catalyses the reaction a 1,2-diacyl-sn-glycero-3-phosphocholine + H2O = a 2-acyl-sn-glycero-3-phosphocholine + a fatty acid + H(+). It carries out the reaction 1,2-dihexadecanoyl-sn-glycero-3-phosphocholine + H2O = 1-hexadecanoyl-sn-glycero-3-phosphocholine + hexadecanoate + H(+). The catalysed reaction is 1,2-dihexadecanoyl-sn-glycero-3-phosphocholine + H2O = 2-hexadecanoyl-sn-glycero-3-phosphocholine + hexadecanoate + H(+). The enzyme catalyses 1-hexadecanoyl-2-(9Z-octadecenoyl)-sn-glycero-3-phosphocholine + H2O = 2-(9Z-octadecenoyl)-sn-glycero-3-phosphocholine + hexadecanoate + H(+). It catalyses the reaction 1-hexadecanoyl-2-(9Z-octadecenoyl)-sn-glycero-3-phosphocholine + H2O = 1-hexadecanoyl-sn-glycero-3-phosphocholine + (9Z)-octadecenoate + H(+). It carries out the reaction 1-hexadecanoyl-2-(5Z,8Z,11Z,14Z-eicosatetraenoyl)-sn-glycero-3-phosphocholine + H2O = 1-hexadecanoyl-sn-glycero-3-phosphocholine + (5Z,8Z,11Z,14Z)-eicosatetraenoate + H(+). The catalysed reaction is 1-hexadecanoyl-2-(5Z,8Z,11Z,14Z-eicosatetraenoyl)-sn-glycero-3-phosphocholine + H2O = 2-(5Z,8Z,11Z,14Z)-eicosatetraenoyl-sn-glycero-3-phosphocholine + hexadecanoate + H(+). The enzyme catalyses 1-hexadecanoyl-2-(9Z,12Z-octadecadienoyl)-sn-glycero-3-phosphoethanolamine + H2O = 1-hexadecanoyl-sn-glycero-3-phosphoethanolamine + (9Z,12Z)-octadecadienoate + H(+). It catalyses the reaction 1-hexadecanoyl-2-(9Z,12Z-octadecadienoyl)-sn-glycero-3-phosphoethanolamine + H2O = 2-(9Z,12Z)-octadecadienoyl-sn-glycero-3-phosphoethanolamine + hexadecanoate + H(+). It carries out the reaction 1-hexadecanoyl-2-(5Z,8Z,11Z,14Z-eicosatetraenoyl)-sn-glycero-3-phosphoethanolamine + H2O = 1-hexadecanoyl-sn-glycero-3-phosphoethanolamine + (5Z,8Z,11Z,14Z)-eicosatetraenoate + H(+). The catalysed reaction is 1-hexadecanoyl-2-(5Z,8Z,11Z,14Z-eicosatetraenoyl)-sn-glycero-3-phosphoethanolamine + H2O = 2-(5Z,8Z,11Z,14Z)-eicosatetraenoyl-sn-glycero-3-phosphoethanolamine + hexadecanoate + H(+). The enzyme catalyses 1-hexanoyl-2-acyl-sn-glycero-3-phosphocholine + H2O = hexanoate + a 2-acyl-sn-glycero-3-phosphocholine + H(+). It catalyses the reaction 1-hexanoyl-2-acyl-sn-glycero-3-phosphocholine + H2O = 1-hexanoyl-sn-glycero-3-phosphocholine + a fatty acid + H(+). It carries out the reaction 1,2-diheptadecanoyl-sn-glycero-3-phosphoethanolamine + 1-(9Z-octadecenoyl)-2-hexadecanoyl-sn-glycero-3-phosphocholine = 1,2-diheptadecanoyl-sn-glycero-3-phospho-N-hexadecanoyl-ethanolamine + 1-(9Z-octadecenoyl)-sn-glycero-3-phosphocholine + H(+). The catalysed reaction is 1,2-diheptadecanoyl-sn-glycero-3-phosphoethanolamine + 1-(9Z-octadecenoyl)-2-hexadecanoyl-sn-glycero-3-phosphocholine = 1,2-diheptadecanoyl-sn-glycero-3-phospho-N-(9Z-octadecenoyl)-ethanolamine + 2-hexadecanoyl-sn-glycero-3-phosphocholine + H(+). The enzyme catalyses 1,2-dihexanoyl-sn-glycero-3-phosphoethanolamine + 2-heptanoyl-sn-glycero-3-phosphocholine = hexanoyl-sn-glycero-3-phosphoethanolamine + 1-hexanoyl-2-heptanoyl-sn-glycero-3-phosphocholine. It catalyses the reaction 1-hexadecanoyl-2-octadecanoyl-sn-glycero-3-phosphocholine + H2O = octadecanoate + 1-hexadecanoyl-sn-glycero-3-phosphocholine + H(+). It carries out the reaction 1-hexadecanoyl-2-octadecanoyl-sn-glycero-3-phosphocholine + H2O = 2-octadecanoyl-sn-glycero-3-phosphocholine + hexadecanoate + H(+). The catalysed reaction is 1-octadecanoyl-2-hexadecanoyl-sn-glycero-3-phosphocholine + H2O = 1-octadecanoyl-sn-glycero-3-phosphocholine + hexadecanoate + H(+). The enzyme catalyses 1-octadecanoyl-2-hexadecanoyl-sn-glycero-3-phosphocholine + H2O = 2-hexadecanoyl-sn-glycero-3-phosphocholine + octadecanoate + H(+). It catalyses the reaction 1-hexadecanoyl-2-(9Z,12Z-octadecadienoyl)-sn-glycero-3-phosphocholine + H2O = (9Z,12Z)-octadecadienoate + 1-hexadecanoyl-sn-glycero-3-phosphocholine + H(+). It carries out the reaction 1-hexadecanoyl-2-(9Z,12Z-octadecadienoyl)-sn-glycero-3-phosphocholine + H2O = 2-(9Z,12Z-octadecadienoyl)-sn-glycero-3-phosphocholine + hexadecanoate + H(+). The catalysed reaction is 1,2-di-(9Z-octadecenoyl)-sn-glycero-3-phosphocholine + H2O = 2-(9Z-octadecenoyl)-sn-glycero-3-phosphocholine + (9Z)-octadecenoate + H(+). The enzyme catalyses 1,2-dihexadecanoyl-sn-glycero-3-phosphocholine + H2O = hexadecanoyl-sn-glycero-3-phosphocholine + hexadecanoate + H(+). It catalyses the reaction 1,2-di-(9Z-octadecenoyl)-sn-glycero-3-phosphocholine + H2O = 1-(9Z-octadecenoyl)-sn-glycero-3-phosphocholine + (9Z)-octadecenoate + H(+). It carries out the reaction 1,2-di-(9Z-octadecenoyl)-sn-glycero-3-phosphoethanolamine + 1,2-dihexadecanoyl-sn-glycero-3-phosphocholine = hexadecanoyl-sn-glycero-3-phosphocholine + N-hexadecanoyl-1,2-di-(9Z-octadecenoyl)-sn-glycero-3-phosphoethanolamine + H(+). The catalysed reaction is 1,2-di-(9Z,12Z-octadecadienoyl)-sn-glycero-3-phosphocholine + H2O = 1-(9Z,12Z)-octadecadienoyl-sn-glycero-3-phosphocholine + (9Z,12Z)-octadecadienoate + H(+). In terms of biological role, exhibits both phospholipase A1/2 and acyltransferase activities. Shows phospholipase A1 (PLA1) and A2 (PLA2) activity, catalyzing the calcium-independent release of fatty acids from the sn-1 or sn-2 position of glycerophospholipids. For most substrates, PLA1 activity is much higher than PLA2 activity. Shows O-acyltransferase activity,catalyzing the transfer of a fatty acyl group from glycerophospholipid to the hydroxyl group of lysophospholipid. Shows N-acyltransferase activity, catalyzing the calcium-independent transfer of a fatty acyl group at the sn-1 position of phosphatidylcholine (PC) and other glycerophospholipids to the primary amine of phosphatidylethanolamine (PE), forming N-acylphosphatidylethanolamine (NAPE), which serves as precursor for N-acylethanolamines (NAEs). Exhibits high N-acyltransferase activity and low phospholipase A1/2 activity. Required for complete organelle rupture and degradation that occur during eye lens terminal differentiation, when fiber cells that compose the lens degrade all membrane-bound organelles in order to provide lens with transparency to allow the passage of light. Organelle membrane degradation is probably catalyzed by the phospholipase activity. Its function is as follows. (Microbial infection) Acts as a host factor for picornaviruses: required during early infection to promote viral genome release into the cytoplasm. May act as a cellular sensor of membrane damage at sites of virus entry, which relocalizes to sites of membrane rupture upon virus unfection. Facilitates safe passage of the RNA away from LGALS8, enabling viral genome translation by host ribosome. May also be involved in initiating pore formation, increasing pore size or in maintaining pores for genome delivery. The lipid-modifying enzyme activity is required for this process. This Homo sapiens (Human) protein is Phospholipase A and acyltransferase 3.